The chain runs to 408 residues: RUN domain-containing protein 3B (408 aa).

The disordered stretch occupies residues M1 to L25. Over residues G8–K22 the composition is skewed to gly residues. Position 13 is an omega-N-methylarginine (R13). The region spanning D58–E190 is the RUN domain. The tract at residues D213–V238 is disordered. Phosphoserine is present on residues S216 and S217. Over residues F225–E236 the composition is skewed to polar residues. A coiled-coil region spans residues A301–L326. A disordered region spans residues Q337–G359.

This sequence belongs to the RUNDC3 family. In terms of assembly, interacts with RAP2A.

The sequence is that of RUN domain-containing protein 3B (Rundc3b) from Mus musculus (Mouse).